Reading from the N-terminus, the 107-residue chain is uncharacterized protein (107 aa).

Residues 13-33 (VLIVTFLSSFIFIVWLPVALV) traverse the membrane as a helical segment.

It localises to the membrane. This is an uncharacterized protein from Saccharomyces cerevisiae (strain ATCC 204508 / S288c) (Baker's yeast).